The primary structure comprises 159 residues: uncharacterized protein (159 aa).

This is an uncharacterized protein from Aquifex aeolicus (strain VF5).